The primary structure comprises 452 residues: Dimethyladenosine transferase 2, mitochondrial (452 aa).

Isoleucine 46, glutamate 99, and aspartate 125 together coordinate S-adenosyl-L-methionine. Residues 408–452 (ANDEPNLEDGVTLPEEDDAEADEIIEEESPVPATTPVKRRRKASS) are disordered. The segment covering 421-436 (PEEDDAEADEIIEEES) has biased composition (acidic residues).

The protein belongs to the class I-like SAM-binding methyltransferase superfamily. rRNA adenine N(6)-methyltransferase family. KsgA subfamily.

Its subcellular location is the mitochondrion. Functionally, probable S-adenosyl-L-methionine-dependent methyltransferase which specifically dimethylates mitochondrial 12S rRNA at the conserved stem loop. Also required for basal transcription of mitochondrial DNA. Also regulates mitochondrial DNA copy number. Stimulates transcription independently of the methyltransferase activity. The sequence is that of Dimethyladenosine transferase 2, mitochondrial (mtTFB2) from Drosophila melanogaster (Fruit fly).